The following is a 313-amino-acid chain: L-lactate dehydrogenase (313 aa).

NAD(+)-binding positions include valine 11, aspartate 32, arginine 37, tyrosine 62, and 76-77; that span reads GV. Substrate is bound by residues glutamine 79, arginine 85, and 117–120; that span reads NPVD. NAD(+) is bound by residues 115–117 and serine 143; that span reads ASN. 148 to 151 is a substrate binding site; it reads DTAR. Positions 153 and 168 each coordinate beta-D-fructose 1,6-bisphosphate. Histidine 175 acts as the Proton acceptor in catalysis. Tyrosine 221 is subject to Phosphotyrosine. Threonine 230 lines the substrate pocket.

It belongs to the LDH/MDH superfamily. LDH family. In terms of assembly, homotetramer.

Its subcellular location is the cytoplasm. It carries out the reaction (S)-lactate + NAD(+) = pyruvate + NADH + H(+). It participates in fermentation; pyruvate fermentation to lactate; (S)-lactate from pyruvate: step 1/1. Allosterically activated by fructose 1,6-bisphosphate (FBP). Functionally, catalyzes the conversion of lactate to pyruvate. In Geotalea daltonii (strain DSM 22248 / JCM 15807 / FRC-32) (Geobacter daltonii), this protein is L-lactate dehydrogenase.